A 463-amino-acid chain; its full sequence is Bifunctional protein HldE (463 aa).

The ribokinase stretch occupies residues 1 to 311; it reads MKKILVVGDL…EEIALILNQT (311 aa). An ATP-binding site is contributed by 191-194; the sequence is NRFE. The active site involves aspartate 260. The segment at 334 to 463 is cytidylyltransferase; that stretch reads FTNGCFDLLH…IEKIKRTCND (130 aa).

In the N-terminal section; belongs to the carbohydrate kinase PfkB family. It in the C-terminal section; belongs to the cytidylyltransferase family. As to quaternary structure, homodimer.

It catalyses the reaction D-glycero-beta-D-manno-heptose 7-phosphate + ATP = D-glycero-beta-D-manno-heptose 1,7-bisphosphate + ADP + H(+). The catalysed reaction is D-glycero-beta-D-manno-heptose 1-phosphate + ATP + H(+) = ADP-D-glycero-beta-D-manno-heptose + diphosphate. The protein operates within nucleotide-sugar biosynthesis; ADP-L-glycero-beta-D-manno-heptose biosynthesis; ADP-L-glycero-beta-D-manno-heptose from D-glycero-beta-D-manno-heptose 7-phosphate: step 1/4. It functions in the pathway nucleotide-sugar biosynthesis; ADP-L-glycero-beta-D-manno-heptose biosynthesis; ADP-L-glycero-beta-D-manno-heptose from D-glycero-beta-D-manno-heptose 7-phosphate: step 3/4. In terms of biological role, catalyzes the phosphorylation of D-glycero-D-manno-heptose 7-phosphate at the C-1 position to selectively form D-glycero-beta-D-manno-heptose-1,7-bisphosphate. Catalyzes the ADP transfer from ATP to D-glycero-beta-D-manno-heptose 1-phosphate, yielding ADP-D-glycero-beta-D-manno-heptose. This chain is Bifunctional protein HldE, found in Helicobacter pylori (strain G27).